The sequence spans 192 residues: Probable thymidylate kinase (192 aa).

ATP is bound at residue 7-14 (GIDGAGKS).

Belongs to the thymidylate kinase family.

The catalysed reaction is dTMP + ATP = dTDP + ADP. The sequence is that of Probable thymidylate kinase from Methanobrevibacter smithii (strain ATCC 35061 / DSM 861 / OCM 144 / PS).